Here is a 397-residue protein sequence, read N- to C-terminus: Tryptophan synthase beta chain (397 aa).

N6-(pyridoxal phosphate)lysine is present on K87.

The protein belongs to the TrpB family. Tetramer of two alpha and two beta chains. The cofactor is pyridoxal 5'-phosphate.

It catalyses the reaction (1S,2R)-1-C-(indol-3-yl)glycerol 3-phosphate + L-serine = D-glyceraldehyde 3-phosphate + L-tryptophan + H2O. Its pathway is amino-acid biosynthesis; L-tryptophan biosynthesis; L-tryptophan from chorismate: step 5/5. In terms of biological role, the beta subunit is responsible for the synthesis of L-tryptophan from indole and L-serine. The sequence is that of Tryptophan synthase beta chain from Enterobacter sp. (strain 638).